The following is a 192-amino-acid chain: MLPLLLASSSAYRRELLARLHLPFTWASPDIDEQRLDGEPPVELVRRLARQKAEALAGSHPRHLIIGSDQVAVLGEQVLGKPHTFERACEQLLECSGQQVSFLTGLALLNSATGQCQVDCVPFTVTLRELSREQVERYVAAEQPLDCAGSFKAEGLGVSLFQSTHGCDATSLIGLPLIRLVDMLTKEGVMVP.

Catalysis depends on aspartate 69, which acts as the Proton acceptor.

Belongs to the Maf family. YceF subfamily. A divalent metal cation serves as cofactor.

Its subcellular location is the cytoplasm. The enzyme catalyses N(7)-methyl-GTP + H2O = N(7)-methyl-GMP + diphosphate + H(+). Functionally, nucleoside triphosphate pyrophosphatase that hydrolyzes 7-methyl-GTP (m(7)GTP). May have a dual role in cell division arrest and in preventing the incorporation of modified nucleotides into cellular nucleic acids. The chain is 7-methyl-GTP pyrophosphatase (maf-2) from Pseudomonas putida (strain ATCC 47054 / DSM 6125 / CFBP 8728 / NCIMB 11950 / KT2440).